A 1314-amino-acid polypeptide reads, in one-letter code: AT-rich interactive domain-containing protein 4B (1314 aa).

Disordered stretches follow at residues 123–169 (LPLT…RKQT) and 266–306 (KTEL…EPFP). Ser-276, Ser-295, and Ser-296 each carry phosphoserine. Positions 277-305 (EAEEEEEEEDDEKEKEDNSSEEEEEIEPF) are enriched in acidic residues. The 93-residue stretch at 306 to 398 (PEERENFLQQ…YLYGFEEYCR (93 aa)) folds into the ARID domain. Residues Lys-428 and Lys-461 each participate in a glycyl lysine isopeptide (Lys-Gly) (interchain with G-Cter in SUMO2) cross-link. Residues 439–464 (NVEDSKNVMPKEETPAEDESERKENI) show a composition bias toward basic and acidic residues. Disordered stretches follow at residues 439-577 (NVED…KVQV), 635-678 (IKHR…SPEM), 709-888 (ASES…EEKR), 943-1215 (KELF…RLPK), and 1256-1290 (VASI…SITA). Ser-482 is subject to Phosphoserine. The segment covering 486 to 511 (KEAHITKLEENENLEDKDGGRARTEE) has biased composition (basic and acidic residues). Residues 531 to 567 (NKEEDEDDEEIEEEEEEDEEEDEDEDDDDNNEEEEFE) show a composition bias toward acidic residues. Residues 572–624 (GMKVQVRYGRGKNQKMYEASIKDSDVEGGEALYLVHYCGWNVRYDEWIKADKI) form the Tudor-knot domain. The span at 643-656 (NKLDKEKDRDEKYS) shows a compositional bias: basic and acidic residues. Phosphoserine occurs at positions 666, 668, 675, and 717. Basic and acidic residues-rich tracts occupy residues 722–754 (ERCT…KEEQ) and 778–787 (SPERLRKDME). A Glycyl lysine isopeptide (Lys-Gly) (interchain with G-Cter in SUMO2) cross-link involves residue Lys-751. Phosphoserine occurs at positions 778 and 790. The segment covering 788–800 (AISEDTDFEEEDE) has biased composition (acidic residues). The residue at position 793 (Thr-793) is a Phosphothreonine. Basic and acidic residues-rich tracts occupy residues 808–817 (VKKDTTDKAL), 841–853 (GKKE…KEPL), and 997–1012 (KPIE…RKTE). Residues 1013-1023 (FPSSGSNSVLN) are compositionally biased toward polar residues. Ser-1016 is modified (phosphoserine). Position 1028 is a phosphothreonine (Thr-1028). The span at 1030 to 1051 (ESPSSVTITEASQQQSSVTVSV) shows a compositional bias: low complexity. A Phosphoserine modification is found at Ser-1031. Residues 1058 to 1067 (EEVRSIKSET) show a composition bias toward basic and acidic residues. Residues 1089–1103 (SSPAGFDASVSSSSS) are compositionally biased toward low complexity. The span at 1132 to 1150 (KKQKRSHKATVVNNKKKGK) shows a compositional bias: basic residues. Thr-1152 carries the post-translational modification Phosphothreonine. A phosphoserine mark is found at Ser-1154, Ser-1155, Ser-1157, and Ser-1161. The span at 1164 to 1186 (ESVTKTQTIKSVPTGMKTHNSKS) shows a compositional bias: polar residues. Residues 1198–1210 (RNGDKDPDLKEPS) show a composition bias toward basic and acidic residues. A coiled-coil region spans residues 1227 to 1272 (ENMTSAERISILQEKLQEIRKHYLSLKSEVASIDRRRKRLKKKERE). A compositionally biased stretch (low complexity) spans 1274–1290 (AATSSSSSSPSSSSITA).

In terms of assembly, component of a Sin3A corepressor complex consisting of SIN3A, SAP130, SUDS3/SAP45, SAP180, HDAC1 and HDAC2. Interacts with ARID4A. Interacts with AR. In terms of tissue distribution, expressed in Sertoli cells of the testis.

It localises to the nucleus. Its function is as follows. Acts as a transcriptional repressor. May function in the assembly and/or enzymatic activity of the Sin3A corepressor complex or in mediating interactions between the complex and other regulatory complexes. Plays a role in the regulation of epigenetic modifications at the PWS/AS imprinting center near the SNRPN promoter, where it might function as part of a complex with RB1 and ARID4A. Involved in spermatogenesis, together with ARID4A, where it functions as a transcriptional coactivator for AR (androgen receptor) and enhances expression of genes required for sperm maturation. Regulates expression of the tight junction protein CLDN3 in the testis, which is important for integrity of the blood-testis barrier. Plays a role in myeloid homeostasis where it regulates the histone methylation state of bone marrow cells and expression of various genes involved in hematopoiesis. May function as a leukemia suppressor. The polypeptide is AT-rich interactive domain-containing protein 4B (Arid4b) (Mus musculus (Mouse)).